We begin with the raw amino-acid sequence, 735 residues long: Rho GTPase-activating protein SYDE1 (735 aa).

The interval 1–253 (MAEPLLRKTF…SPTSFRPYEV (253 aa)) is disordered. The segment covering 14-31 (RGREKLPRKKSDAKERGH) has biased composition (basic and acidic residues). Positions 35–46 (RPEPSPPEPEPQ) are enriched in pro residues. Residues 47-71 (APEGSQAGAEGPSSPEASRSPARGA) are compositionally biased toward low complexity. Positions 122-131 (PPAPEPPGPQ) are enriched in pro residues. The segment covering 211-221 (GGPGPAAGPGG) has biased composition (gly residues). A phosphoserine mark is found at S224, S231, S235, and S244. A C2 domain is found at 249–366 (RPYEVGPAAR…FRGCQAQQLA (118 aa)). Positions 398–604 (LPLPLLVERE…YLLQSWPDPR (207 aa)) constitute a Rho-GAP domain. At S575 the chain carries Phosphoserine. Disordered stretches follow at residues 608 to 651 (QSPD…SNRY) and 674 to 696 (DYDH…PRVT). A phosphoserine mark is found at S681 and S683.

In terms of processing, palmitoylated. Probably palmitoylated by ZDHHC3 and ZDHHC7. Expressed in trophoblast cells of placental villi.

In terms of biological role, GTPase activator for the Rho-type GTPases. As a GCM1 downstream effector, it is involved in placental development and positively regulates trophoblast cells migration. It regulates cytoskeletal remodeling by controlling the activity of Rho GTPases including RHOA, CDC42 and RAC1. This is Rho GTPase-activating protein SYDE1 (SYDE1) from Homo sapiens (Human).